Consider the following 188-residue polypeptide: Grand meiotic recombination cluster protein 2 (188 aa).

Composition is skewed to polar residues over residues 1 to 13 (MSDT…QSSE) and 21 to 31 (ERTNSLKSPDV). Positions 1–31 (MSDTTEVPRQSSENDQDNNLERTNSLKSPDV) are disordered.

In terms of biological role, probable transcriptional activator involved in meiotic prophase and synaptonemal complex (SC) assembly. The protein is Grand meiotic recombination cluster protein 2 (GMC2) of Saccharomyces cerevisiae (strain ATCC 204508 / S288c) (Baker's yeast).